We begin with the raw amino-acid sequence, 338 residues long: MTEKFNGFSHDEILKITGVKEGGVGKRPASLEAAKPALRIQPGIRRMPDKIFRQADQLRKQQQQQPQQPIQKPDVAKKTKSGTATPTEKPPTPTPAAEDDVANGSLNLDRPLSDSLIEALYHGNATARDKKTPATYADAETTSTDDSSILKISGGDSQTTSSTDDGSILPSTQDTSPRERLNTDSPFKGISLKDFEQHRRMIEEQNKQKKQMLYQAIEQHTQKTAAESRKIEEIRHELSKLESDLAVDVALLRKQIDNACIHFANVEKQYVKIEAQFLRAKIELHNASEKKELLTEHLCTVIAHNEDRKAQKLTELMQKVGLSPTDDCQPIDLTQQSP.

Composition is skewed to basic and acidic residues over residues 1–14 (MTEKFNGFSHDEIL) and 46–59 (RMPDKIFRQADQLR). 2 disordered regions span residues 1-109 (MTEK…LNLD) and 127-188 (ARDK…SPFK). Composition is skewed to low complexity over residues 60-73 (KQQQQQPQQPIQKP) and 153-167 (SGGDSQTTSSTDDGS). Residues 192–244 (LKDFEQHRRMIEEQNKQKKQMLYQAIEQHTQKTAAESRKIEEIRHELSKLESD) adopt a coiled-coil conformation. Residues 244–260 (DLAVDVALLRKQIDNAC) form an essential for Sas-6 binding region. Residues 246–286 (AVDVALLRKQIDNACIHFANVEKQYVKIEAQFLRAKIELHN) form a necessary for localization to the centrosome region. A necessary for localization to the Golgi region spans residues 246–323 (AVDVALLRKQ…TELMQKVGLS (78 aa)). Residues 260 to 286 (CIHFANVEKQYVKIEAQFLRAKIELHN) are necessary for interaction with Sas-6 and essential for homodimerization.

The protein belongs to the GORAB family. As to quaternary structure, homodimer (via C-terminus); dimerization appears to be required for its trans-Golgi localization but not for its function and centriolar localization. Interacts (via C-terminus) with Rab6; binds Rab6 as a homodimer, this interaction seems to be required for trans-Golgi localization. Interacts (via C-terminus) with Sas-6; binds as a monomer to a Sas-6 homodimer.

It is found in the cytoplasm. The protein resides in the cytoskeleton. The protein localises to the microtubule organizing center. Its subcellular location is the centrosome. It localises to the centriole. It is found in the golgi apparatus. The protein resides in the trans-Golgi network. Required for centriole duplication likely through its interaction with Sas-6. During embryogenesis, maternally provided protein is required for centrosome duplication and nuclear division cycles of the syncytial embryos. In femoral chordotonal organs, required for sensory cilia structural integrity and functionality necessary for motor coordination. In male germline, has a role in cytokinesis which seems dependent on its localization to the Golgi. The sequence is that of RAB6-interacting golgin from Drosophila melanogaster (Fruit fly).